The primary structure comprises 138 residues: Large ribosomal subunit protein bL19 (138 aa).

This sequence belongs to the bacterial ribosomal protein bL19 family.

In terms of biological role, this protein is located at the 30S-50S ribosomal subunit interface and may play a role in the structure and function of the aminoacyl-tRNA binding site. This is Large ribosomal subunit protein bL19 from Rickettsia massiliae (strain Mtu5).